The following is a 919-amino-acid chain: MYVLKRLELRNIMSHFNTSIDFREGFTAIVGRNGAGKSTILEAILFSITPHQAPRRSSMISENSSRGEIYLALQSSEGRLLELRNKLIRRGGGTNTEAAIITLEGRRIASKPTGYKEEIHKILGLRGLPNPASYIEKAIIISQGGLQTLAEILSEPKELRDLLDAALGYALLKQAISNIGDVVLGVSPDGSPVKLGSKSITRLQSGYMTLRNEVLGVDREIREASKRLEELEREREELERRARDLESEAKALQSEIGKLETMEEMLVNVTSMIRSERSKLDTINTRLRYAESKISSIDDLEKRRAELRAKASLAHEVAELARLQSRLDKLGRDLEMIRDAVEKLEVSRRLKEIESARREAENRLLEARSSIKEEQRRYTLLDYRVTRGRSIVTNIRRVLSECRSKDLCGSEKPESVLERLDAVINDLESKARALDQEASALEAEARRLVQALSMLEESGGSARCPVCGAELPPGRAEAIARHYRHEAERLRKAAKEKAAEAEKARAEASRLQDKRRRIELLLSRLNQLEEGLRELGFQTPEDLAKAEQKLRMLRERLEELRKLENSLEEKVRNLSREEVALREAKTRALEVLQRLGIKEEEAREKLKTLSSESKKLERMLVSKAEDLATRLGITAYRSLDDLLEKAREALEGVDKELSAIERRLEEARRLKEEAAKLKWEAEQVMKRLEELEAEEKKLRKEVSRKSEIEARLKEVQNTLAELDDRISRIDREMGELQTRIREMKSRKASGEEALKLYLPAAASRRIMEEIGEIAYRRLLAVLEDEMNDILSRFNLDVAGVEIREKAAREIEVKAIGGNGAYRPLEAVSGGERTVLALSFVLALNKAVGGKLGFLALDEPTANLDEDRRRSLVEVLRGISVEGLVRQLVVVTHHEDVRDYADTICLVTRTQQGSRVECTY.

ATP is bound by residues 33-39 (NGAGKST) and Gln143. Coiled-coil stretches lie at residues 208–268 (MTLR…MLVN), 315–379 (HEVA…RRYT), and 414–458 (ESVL…LEES). Positions 417–516 (LERLDAVIND…EASRLQDKRR (100 aa)) constitute a Zinc-hook domain. Residues Cys464 and Cys467 each coordinate Zn(2+). Coiled coils occupy residues 486-515 (EAER…QDKR), 541-595 (EDLA…LQRL), and 635-749 (AYRS…RKAS).

The protein belongs to the SMC family. RAD50 subfamily. Homodimer. Forms a heterotetramer composed of two Mre11 subunits and two Rad50 subunits. It depends on Zn(2+) as a cofactor.

In terms of biological role, part of the Rad50/Mre11 complex, which is involved in the early steps of DNA double-strand break (DSB) repair. The complex may facilitate opening of the processed DNA ends to aid in the recruitment of HerA and NurA. Rad50 controls the balance between DNA end bridging and DNA resection via ATP-dependent structural rearrangements of the Rad50/Mre11 complex. This Aeropyrum pernix (strain ATCC 700893 / DSM 11879 / JCM 9820 / NBRC 100138 / K1) protein is DNA double-strand break repair Rad50 ATPase.